A 316-amino-acid chain; its full sequence is 4-hydroxyphenylacetate decarboxylase activating enzyme (316 aa).

In terms of domain architecture, Radical SAM core spans 20–307 (HDGPGCRTTV…QDIFLDNGIA (288 aa)). 7 residues coordinate [4Fe-4S] cluster: C34, C38, C41, C60, C66, C69, and C105. Residue 40-42 (WCA) participates in S-adenosyl-L-methionine binding. In terms of domain architecture, 4Fe-4S ferredoxin-type spans 84-115 (NKPVIDWNICKDCESFECVNSCYYNAFKLCAK). S-adenosyl-L-methionine contacts are provided by residues G144, 193-195 (DIK), and H267.

This sequence belongs to the organic radical-activating enzymes family. Monomer. The cofactor is [4Fe-4S] cluster.

It catalyses the reaction glycyl-[protein] + reduced [flavodoxin] + S-adenosyl-L-methionine = glycin-2-yl radical-[protein] + semiquinone [flavodoxin] + 5'-deoxyadenosine + L-methionine + H(+). Functionally, catalyzes activation of 4-hydroxyphenylacetate decarboxylase under anaerobic conditions by generation of an organic free radical on a glycine residue, via a homolytic cleavage of S-adenosyl-L-methionine (SAM). The chain is 4-hydroxyphenylacetate decarboxylase activating enzyme from Clostridioides difficile (Peptoclostridium difficile).